The chain runs to 153 residues: uncharacterized protein (153 aa).

Positions 1–88 (MDKDRPGLPA…VPPPQLDHPG (88 aa)) are disordered.

This is an uncharacterized protein from Epstein-Barr virus (strain P3HR-1) (HHV-4).